We begin with the raw amino-acid sequence, 220 residues long: Ribosomal RNA large subunit methyltransferase E (220 aa).

S-adenosyl-L-methionine contacts are provided by Gly-60, Trp-62, Asp-92, Asp-108, and Asp-133. The active-site Proton acceptor is Lys-173. The segment at 195–220 (APRKPKASRDKSSETFILGRHLKRPR) is disordered.

The protein belongs to the class I-like SAM-binding methyltransferase superfamily. RNA methyltransferase RlmE family.

It localises to the cytoplasm. It carries out the reaction uridine(2552) in 23S rRNA + S-adenosyl-L-methionine = 2'-O-methyluridine(2552) in 23S rRNA + S-adenosyl-L-homocysteine + H(+). Specifically methylates the uridine in position 2552 of 23S rRNA at the 2'-O position of the ribose in the fully assembled 50S ribosomal subunit. This Burkholderia lata (strain ATCC 17760 / DSM 23089 / LMG 22485 / NCIMB 9086 / R18194 / 383) protein is Ribosomal RNA large subunit methyltransferase E.